We begin with the raw amino-acid sequence, 208 residues long: Imidazole glycerol phosphate synthase subunit HisH (208 aa).

Residues Met-1–Ser-206 enclose the Glutamine amidotransferase type-1 domain. The active-site Nucleophile is the Cys-79. Catalysis depends on residues His-181 and Glu-183.

Heterodimer of HisH and HisF.

The protein resides in the cytoplasm. It catalyses the reaction 5-[(5-phospho-1-deoxy-D-ribulos-1-ylimino)methylamino]-1-(5-phospho-beta-D-ribosyl)imidazole-4-carboxamide + L-glutamine = D-erythro-1-(imidazol-4-yl)glycerol 3-phosphate + 5-amino-1-(5-phospho-beta-D-ribosyl)imidazole-4-carboxamide + L-glutamate + H(+). The catalysed reaction is L-glutamine + H2O = L-glutamate + NH4(+). The protein operates within amino-acid biosynthesis; L-histidine biosynthesis; L-histidine from 5-phospho-alpha-D-ribose 1-diphosphate: step 5/9. Its function is as follows. IGPS catalyzes the conversion of PRFAR and glutamine to IGP, AICAR and glutamate. The HisH subunit catalyzes the hydrolysis of glutamine to glutamate and ammonia as part of the synthesis of IGP and AICAR. The resulting ammonia molecule is channeled to the active site of HisF. In Listeria monocytogenes serotype 4b (strain CLIP80459), this protein is Imidazole glycerol phosphate synthase subunit HisH.